The primary structure comprises 504 residues: UDP-N-acetylglucosamine--peptide N-acetylglucosaminyltransferase GtfA subunit (504 aa).

UDP is bound at residue 16 to 19 (GVEY). Residue H243 participates in N-acetyl-D-glucosamine binding. 385–386 (HK) serves as a coordination point for UDP. 405-408 (EGFG) is an N-acetyl-D-glucosamine binding site.

It belongs to the glycosyltransferase group 1 family. Glycosyltransferase 4 subfamily. Interacts with stabilizing protein GtfB (Gtf1), probably via the N-terminus of this protein; probably forms a heterotetramer with 2 subunits each of GtfA and GtfB. Part of the accessory SecA2/SecY2 protein translocation apparatus.

The protein localises to the cytoplasm. Its subcellular location is the cell membrane. The enzyme catalyses L-seryl-[protein] + UDP-N-acetyl-alpha-D-glucosamine = 3-O-[N-acetyl-alpha-D-glucosaminyl]-L-seryl-[protein] + UDP + H(+). It functions in the pathway protein modification; protein glycosylation. Required for polymorphic O-glycosylation of serine-rich repeat protein Fap1. Catalyzes the first step in glycosylation by transferring N-acetylglucosamine from UDP-GlcNAc to serine residues in Fap1. Part of the accessory SecA2/SecY2 system specifically required to export Fap1, a serine-rich fimbrial adhesin encoded upstream in the same operon. The GtfA-GtfB (Gtf1-Gtf2 in this bacteria) complex adds GlcNAc from UDP-GlcNAc to Fap1, attaching the first sugar residue. Cannot use not UDP-Glc as substrate. This subunit has very low glycosyltransferase activity; the GtfB stabilizing protein enhances membrane association, protease resistance and glycosyltransferase activity. This Streptococcus parasanguinis protein is UDP-N-acetylglucosamine--peptide N-acetylglucosaminyltransferase GtfA subunit.